The primary structure comprises 79 residues: UPF0180 protein BCAH187_A1552 (79 aa).

The protein belongs to the UPF0180 family.

This chain is UPF0180 protein BCAH187_A1552, found in Bacillus cereus (strain AH187).